The following is a 224-amino-acid chain: Golgi to ER traffic protein 1 (224 aa).

The Lumenal segment spans residues 1 to 33; it reads MDEAIIVDAEFVAPVGTTAGEFVPIDRAPAAGL. Residues 34-53 form a helical membrane-spanning segment; sequence LLLVAFVVLYAKVISKLGKP. At 54-137 the chain is on the cytoplasmic side; the sequence is AIQEFLWEII…RFFTIISSAI (84 aa). Residues 102-124 are a coiled coil; that stretch reads AKLDREYGKLKVEIEDINNLLTA. Residues 138–158 form a helical membrane-spanning segment; that stretch reads FLSTTGMKMFLRIKHRKAAIF. Over 159–182 the chain is Lumenal; sequence WLPKNAFPYPIEYILSFSSAPLGS. The chain crosses the membrane as a helical span at residues 183-199; it reads VSVSAWLMICDAAMDLI. At 200-224 the chain is on the cytoplasmic side; sequence VTIFVALVVGVIGMLRSNKVKPKTA.

This sequence belongs to the WRB/GET1 family. As to quaternary structure, component of the Golgi to ER traffic (GET) complex, which is composed of GET1, GET2 and GET3. Within the complex, GET1 and GET2 form a heterotetramer which is stabilized by phosphatidylinositol binding and which binds to the GET3 homodimer.

Its subcellular location is the endoplasmic reticulum membrane. It is found in the golgi apparatus membrane. Required for the post-translational delivery of tail-anchored (TA) proteins to the endoplasmic reticulum. Together with GET2, acts as a membrane receptor for soluble GET3, which recognizes and selectively binds the transmembrane domain of TA proteins in the cytosol. The GET complex cooperates with the HDEL receptor ERD2 to mediate the ATP-dependent retrieval of resident ER proteins that contain a C-terminal H-D-E-L retention signal from the Golgi to the ER. This chain is Golgi to ER traffic protein 1, found in Yarrowia lipolytica (strain CLIB 122 / E 150) (Yeast).